The primary structure comprises 242 residues: Succinyl-CoA:3-ketoacid coenzyme A transferase subunit A (242 aa).

33 to 39 (GGFGLCG) lines the CoA pocket.

This sequence belongs to the 3-oxoacid CoA-transferase subunit A family. As to quaternary structure, heterodimer of a subunit A and a subunit B.

The enzyme catalyses a 3-oxo acid + succinyl-CoA = a 3-oxoacyl-CoA + succinate. Its pathway is bacterial outer membrane biogenesis; lipopolysaccharide biosynthesis. The polypeptide is Succinyl-CoA:3-ketoacid coenzyme A transferase subunit A (lpsI) (Xanthomonas campestris pv. campestris (strain B100)).